Here is a 146-residue protein sequence, read N- to C-terminus: 3-hydroxyacyl-[acyl-carrier-protein] dehydratase FabZ (146 aa).

The active site involves His-49.

The protein belongs to the thioester dehydratase family. FabZ subfamily.

The protein resides in the cytoplasm. It carries out the reaction a (3R)-hydroxyacyl-[ACP] = a (2E)-enoyl-[ACP] + H2O. Involved in unsaturated fatty acids biosynthesis. Catalyzes the dehydration of short chain beta-hydroxyacyl-ACPs and long chain saturated and unsaturated beta-hydroxyacyl-ACPs. In Pseudomonas aeruginosa (strain LESB58), this protein is 3-hydroxyacyl-[acyl-carrier-protein] dehydratase FabZ.